Reading from the N-terminus, the 183-residue chain is Pyruvoyl-dependent arginine decarboxylase 2 (183 aa).

Serine 41 bears the Pyruvic acid (Ser) mark.

It belongs to the PdaD family. Pyruvate is required as a cofactor.

It catalyses the reaction L-arginine + H(+) = agmatine + CO2. This is Pyruvoyl-dependent arginine decarboxylase 2 (pdaD2) from Methanosarcina mazei (strain ATCC BAA-159 / DSM 3647 / Goe1 / Go1 / JCM 11833 / OCM 88) (Methanosarcina frisia).